The sequence spans 271 residues: Carboxy-terminal domain RNA polymerase II polypeptide A small phosphatase 2 (271 aa).

Serine 5 carries the phosphoserine modification. The 159-residue stretch at 97–255 (EDQGRICVVI…LNLIPIFEEL (159 aa)) folds into the FCP1 homology domain. The active-site 4-aspartylphosphate intermediate is aspartate 107. Mg(2+)-binding residues include aspartate 107, aspartate 109, and asparagine 218. Residue aspartate 109 is the Proton donor of the active site.

Monomer. Interacts with REST. Mg(2+) serves as cofactor. In terms of tissue distribution, expression is restricted to non-neuronal tissues. Highest expression in pancreas and lowest in liver.

Its subcellular location is the nucleus. It carries out the reaction O-phospho-L-seryl-[protein] + H2O = L-seryl-[protein] + phosphate. The catalysed reaction is O-phospho-L-threonyl-[protein] + H2O = L-threonyl-[protein] + phosphate. Functionally, preferentially catalyzes the dephosphorylation of 'Ser-5' within the tandem 7 residue repeats in the C-terminal domain (CTD) of the largest RNA polymerase II subunit POLR2A. Negatively regulates RNA polymerase II transcription, possibly by controlling the transition from initiation/capping to processive transcript elongation. Recruited by REST to neuronal genes that contain RE-1 elements, leading to neuronal gene silencing in non-neuronal cells. May contribute to the development of sarcomas. In Homo sapiens (Human), this protein is Carboxy-terminal domain RNA polymerase II polypeptide A small phosphatase 2 (CTDSP2).